We begin with the raw amino-acid sequence, 326 residues long: Lipid droplet-associated hydrolase (326 aa).

Ser140 functions as the Nucleophile in the catalytic mechanism. Catalysis depends on charge relay system residues Asp272 and His301.

Belongs to the AB hydrolase superfamily. LDAH family. In terms of tissue distribution, expressed in liver, adrenal gland, prostate, spleen, kidney, brown and white adipose tissue, testis and to a lesser extent in brain (at protein level). Expressed in peritoneal macrophages and bone marrow-derived macrophages (at protein level). Highly expressed in macrophage and foam cell-rich areas in atherosclerotic lesions (at protein level). mRNA, but no protein, expressed in heart and muscle.

Its subcellular location is the lipid droplet. It localises to the endoplasmic reticulum. The enzyme catalyses a cholesterol ester + H2O = cholesterol + a fatty acid + H(+). Its function is as follows. Probable serine lipid hydrolase associated with lipid droplets. Has low cholesterol esterase activity. Appears to lack triglyceride lipase activity. Involved in cholesterol and triglyceride homeostasis; stimulates cellular triglyceride accumulation and cellular cholesterol release. Acts antagonistically with PNPLA2/ATGL in regulation of cellular lipid stores. May regulate triglyceride accumulation indirectly through stimulation of PNPLA2/ATGL ubiquitination and proteasomal degradation. Promotes microtubule-dependent lipid droplet fusion. Highly expressed in macrophage-rich areas in atherosclerotic lesions, suggesting that it could promote cholesterol ester turnover in macrophages. In terms of biological role, stimulates cellular triglyceride accumulation and lipid droplet fusion. Associates with lipid droplets but does not stimulate cellular triglyceride accumulation, lipid droplet fusion or ATGL proteasomal degradation. This chain is Lipid droplet-associated hydrolase, found in Mus musculus (Mouse).